Consider the following 84-residue polypeptide: Putative membrane protein insertion efficiency factor (84 aa).

The tract at residues 60 to 84 (WSQPGEDPVPDHFSLKRNDTRKQSH) is disordered. Basic and acidic residues predominate over residues 68–84 (VPDHFSLKRNDTRKQSH).

It belongs to the UPF0161 family.

It localises to the cell membrane. Its function is as follows. Could be involved in insertion of integral membrane proteins into the membrane. This Streptococcus gordonii (strain Challis / ATCC 35105 / BCRC 15272 / CH1 / DL1 / V288) protein is Putative membrane protein insertion efficiency factor.